The sequence spans 329 residues: Thioredoxin domain-containing protein 6 (329 aa).

The region spanning 11-115 (QVNINTQELW…QKTILQQLEA (105 aa)) is the Thioredoxin domain. Positions 157–303 (GKTCTLGIIK…LFPSFKFSDK (147 aa)) are NDK. Residues 303-329 (KDKEAPPGAEAQTMVGPVEDPCMSERI) are disordered.

This sequence belongs to the NDK family. In terms of assembly, monomer and homodimer. In terms of tissue distribution, expressed in lung airway epithelium (at protein level).

Its subcellular location is the cytoplasm. It is found in the cytoskeleton. The protein localises to the cilium axoneme. It localises to the dynein axonemal particle. In terms of biological role, may be a regulator of microtubule physiology. The polypeptide is Thioredoxin domain-containing protein 6 (Mus musculus (Mouse)).